Consider the following 150-residue polypeptide: 3-hydroxyacyl-[acyl-carrier-protein] dehydratase FabZ (150 aa).

The active site involves His54.

Belongs to the thioester dehydratase family. FabZ subfamily.

It localises to the cytoplasm. The enzyme catalyses a (3R)-hydroxyacyl-[ACP] = a (2E)-enoyl-[ACP] + H2O. Involved in unsaturated fatty acids biosynthesis. Catalyzes the dehydration of short chain beta-hydroxyacyl-ACPs and long chain saturated and unsaturated beta-hydroxyacyl-ACPs. The protein is 3-hydroxyacyl-[acyl-carrier-protein] dehydratase FabZ of Vibrio parahaemolyticus serotype O3:K6 (strain RIMD 2210633).